The sequence spans 849 residues: DNA mismatch repair protein MutS (849 aa).

602-609 contributes to the ATP binding site; that stretch reads GPNMSGKS.

The protein belongs to the DNA mismatch repair MutS family.

Functionally, this protein is involved in the repair of mismatches in DNA. It is possible that it carries out the mismatch recognition step. This protein has a weak ATPase activity. The chain is DNA mismatch repair protein MutS from Streptococcus mutans serotype c (strain ATCC 700610 / UA159).